Consider the following 266-residue polypeptide: NADP-dependent mannitol dehydrogenase (266 aa).

4 residues coordinate NADP(+): T31, I33, N107, and R140. The active-site Proton donor is S159. Residues Y174, K178, I206, and T208 each contribute to the NADP(+) site. Y174 (proton acceptor) is an active-site residue. The Lowers pKa of active site Tyr role is filled by K178.

Belongs to the short-chain dehydrogenases/reductases (SDR) family. In terms of assembly, homotetramer.

The protein localises to the vacuole. It carries out the reaction D-mannitol + NADP(+) = D-fructose + NADPH + H(+). The chain is NADP-dependent mannitol dehydrogenase from Alternaria alternata (Alternaria rot fungus).